Reading from the N-terminus, the 386-residue chain is Patatin-2-Kuras 2 (386 aa).

Positions 1–23 are cleaved as a signal peptide; the sequence is MATTKSFLILFFMILATTSSTCA. In terms of domain architecture, PNPLA spans 32–229; sequence LSIDGGGIKG…TVGDPALLSL (198 aa). The GXGXXG motif lies at 36–41; the sequence is GGGIKG. Residues 75–79 carry the GXSXG motif; sequence GTSTG. Residue serine 77 is the Nucleophile of the active site. Residue asparagine 115 is glycosylated (N-linked (GlcNAc...) asparagine). The Proton acceptor role is filled by aspartate 215. The DGA/G motif lies at 215 to 217; sequence DGA. Residues 321-384 are a coiled coil; sequence ENALTGTTTE…DRKKLRANKA (64 aa).

It belongs to the patatin family.

The protein resides in the vacuole. Functionally, probable lipolytic acyl hydrolase (LAH), an activity which is thought to be involved in the response of tubers to pathogens. The polypeptide is Patatin-2-Kuras 2 (pat2-k2) (Solanum tuberosum (Potato)).